We begin with the raw amino-acid sequence, 316 residues long: MEKALHRISSMNAALPDISLTDAAPGRRPLEWVGMQGIDLPVVVAEPGCRRDVHARADVQVDLPAPQVKGIHMSRLYGLLDGLADGEALSPAGLQRMLRAMVDSHRDCATRSARVRLRFDLLARRTALVTEGLAGWKAYPVRLDATLSGDAFALRAQVTVVYSSTCPCSAALSRHWIEQAFLTAFGHEARVEPTAVAAWLKRHATAATPHSQRSEAVVSVALPADGTTLGLLDLIDRVEQALGTPVQTAVKRADEQAFAVLNGGNLMFVEDAARRVQAALEDRHASPRVRVRHLESLHPHDAVAWAAPLREGADAC.

It belongs to the GTP cyclohydrolase IV family.

It carries out the reaction GTP + H2O = 7,8-dihydroneopterin 3'-triphosphate + formate + H(+). Its pathway is cofactor biosynthesis; 7,8-dihydroneopterin triphosphate biosynthesis; 7,8-dihydroneopterin triphosphate from GTP: step 1/1. In terms of biological role, converts GTP to 7,8-dihydroneopterin triphosphate. The protein is GTP cyclohydrolase FolE2 2 of Burkholderia orbicola (strain MC0-3).